Here is a 510-residue protein sequence, read N- to C-terminus: Flagellin A (510 aa).

This sequence belongs to the bacterial flagellin family. As to quaternary structure, heteromer of FlaA and FlaB. FlaB is located proximal to the hook while the remainder of the filament is composed of the predominant FlaA.

It localises to the secreted. The protein localises to the bacterial flagellum. In terms of biological role, flagellin is the subunit protein which polymerizes to form the filaments of bacterial flagella. Important for motility and virulence. In Helicobacter pylori (strain ATCC 700392 / 26695) (Campylobacter pylori), this protein is Flagellin A (flaA).